We begin with the raw amino-acid sequence, 174 residues long: Male-enhanced antigen 1 (174 aa).

Disordered regions lie at residues 1–83 (MAAV…DGAA) and 95–123 (HLPD…IPMD). 3 stretches are compositionally biased toward acidic residues: residues 38 to 48 (SSEEPEEEQEE), 65 to 82 (PEQE…EDGA), and 101 to 110 (LESEDEDEEG). A Phosphoserine modification is found at S103.

In terms of tissue distribution, highly expressed in testis. Transcripts can be found in primary and secondary spermatocytes, and spermatids, but the protein itself is only detected in spermatids. No expression in Leydig cells, spermatogonia, or sperm. Very weak expression in the heart, kidney, spleen, thymus and ovary.

In terms of biological role, may play an important role in spermatogenesis and/or testis development. The sequence is that of Male-enhanced antigen 1 (Mea1) from Mus musculus (Mouse).